The chain runs to 918 residues: Hexokinase-1 (918 aa).

The residue at position 1 (M1) is an N-acetylmethionine. Residues 1–10 (MIAAQLLAYY) are mitochondrial-binding peptide (MBP). Hexokinase domains follow at residues 16–458 (DDQV…MVTA) and 464–906 (AEQH…LITA). ATP-binding positions include R30 and 84-89 (DLGGSS). The interval 73–207 (DGSEKGDFIA…DYDANIVAVV (135 aa)) is hexokinase small subdomain 1. 84–91 (DLGGSSFR) contributes to the D-glucose 6-phosphate binding site. D-glucose contacts are provided by residues S155, 172–173 (TK), and 208–209 (ND). The hexokinase large subdomain 1 stretch occupies residues 208–447 (NDTVGTMIDC…SDVRFLLSES (240 aa)). D-glucose 6-phosphate contacts are provided by D209 and T232. D-glucose is bound by residues N235, E260, and 291-294 (QRFE). Residue S337 is modified to Phosphoserine. 413–415 (DGS) is a D-glucose 6-phosphate binding site. ATP is bound by residues 425–426 (RR) and 532–537 (DLGGTN). A hexokinase small subdomain 2 region spans residues 521-655 (DGTEDGDFLA…EFDLDVVAVV (135 aa)). Residue 532–536 (DLGGT) participates in D-glucose 6-phosphate binding. Residues 603-604 (SF), 620-621 (TK), and 656-657 (ND) contribute to the D-glucose site. A hexokinase large subdomain 2 region spans residues 656-895 (NDTVGTMMTC…CNVSFLLSED (240 aa)). 2 residues coordinate D-glucose 6-phosphate: D657 and T680. T680 is a binding site for ATP. D-glucose-binding positions include 682 to 683 (SN), E708, and E742. ATP contacts are provided by residues 747-748 (GI), 784-788 (TKFLS), and 863-867 (TLYKL). D-glucose 6-phosphate is bound by residues 861 to 863 (DGT) and S897.

This sequence belongs to the hexokinase family. Monomer. Interacts with RABL2/RABL2A; binds preferentially to GTP-bound RABL2. Interacts with VDAC1. The HK1-VDAC1 complex interacts with ATF2. Interacts (via N-terminal spermatogenic cell-specific region) with PFKM (via C-terminus). Interacts with SMAD5.

The protein resides in the mitochondrion outer membrane. It localises to the cytoplasm. It is found in the cytosol. It catalyses the reaction a D-hexose + ATP = a D-hexose 6-phosphate + ADP + H(+). It carries out the reaction D-fructose + ATP = D-fructose 6-phosphate + ADP + H(+). The enzyme catalyses D-glucose + ATP = D-glucose 6-phosphate + ADP + H(+). The catalysed reaction is D-mannose + ATP = D-mannose 6-phosphate + ADP + H(+). It catalyses the reaction D-glucosamine + ATP = D-glucosamine 6-phosphate + ADP + H(+). Its pathway is carbohydrate metabolism; hexose metabolism. The protein operates within carbohydrate degradation; glycolysis; D-glyceraldehyde 3-phosphate and glycerone phosphate from D-glucose: step 1/4. With respect to regulation, hexokinase is an allosteric enzyme inhibited by its product D-glucose 6-phosphate. Hexokinase activity is inhibited by N-acetyl-D-glucosamine. Functionally, catalyzes the phosphorylation of various hexoses, such as D-glucose, D-glucosamine, D-fructose, D-mannose and 2-deoxy-D-glucose, to hexose 6-phosphate (D-glucose 6-phosphate, D-glucosamine 6-phosphate, D-fructose 6-phosphate, D-mannose 6-phosphate and 2-deoxy-D-glucose 6-phosphate, respectively). Does not phosphorylate N-acetyl-D-glucosamine. Mediates the initial step of glycolysis by catalyzing phosphorylation of D-glucose to D-glucose 6-phosphate. Involved in innate immunity and inflammation by acting as a pattern recognition receptor for bacterial peptidoglycan. When released in the cytosol, N-acetyl-D-glucosamine component of bacterial peptidoglycan inhibits the hexokinase activity of HK1 and causes its dissociation from mitochondrial outer membrane, thereby activating the NLRP3 inflammasome. The protein is Hexokinase-1 of Bos taurus (Bovine).